Reading from the N-terminus, the 760-residue chain is MRYNQFSYIPTSLERAAEELKELGFDLDLQKTAKANLESFLRKIFFHYPDSDYPLSHLIAKNDMDALSFFQSEQELSKEVFDLLALQVLGFIPGVDFTEADAFLDKLAFPIHFDETEIIKHIHHLLATRCKSGMTLIDDLVSQGMLTMDNDYHFFNGKSLATFDTSQLIREVVYVEAPLDTDQDGQFDLIKVNIIRPQSQKPLPTLMTPSPYHQGINEVANDKKLYRMEKELVVKKRRQITVEDRDFIPLETQPCKLPIGQNLESFSYINSYSLNDYFLARGFANIYVSGVGTAGSTGFMTSGDYAQIESFKAVIDWLNGRATAYTSHSKTHQVRADWANGLVCTTGKSYLGTMSTGLATTGVDGLAMIIAESAISSWYNYYRENGLVCSPGGYPGEDLDVLTELTYSRNLLAGDYLRHNDHYQELLNQQSQALDRQSGDYNQFWHDRNYLKNAHQIKCDVVYSHGLQDWNVKPRQVYEIFNALPSTINKHLFLHQGEHVYMHNWQSIDFRESMNALLCQKLLGLANDFSLPEMIWQDNTCPQNWQERKVFGTSTIKELDLGQELLLIDNHYGEDEFKAYGKDFRASKAALFKGKANQALIDILLEEDLPINGEIVLQLKVKSSENKGLLSAQILDYGKKKRLGDLPIALTQSSIDNGQNFSREPLKELPFREDSYRVISKGFMNLQNRNNLSSIETIPNNKWMTVRLPLQPTIYHLEKGDTLRVILYTTDFEHTVRDNSNYALTIDLSQSQLIVPIASN.

Residues Ser-349, Asp-469, and His-499 each act as charge relay system in the active site.

This sequence belongs to the peptidase S15 family. Homodimer.

It localises to the cytoplasm. The enzyme catalyses Hydrolyzes Xaa-Pro-|- bonds to release unblocked, N-terminal dipeptides from substrates including Ala-Pro-|-p-nitroanilide and (sequentially) Tyr-Pro-|-Phe-Pro-|-Gly-Pro-|-Ile.. Functionally, removes N-terminal dipeptides sequentially from polypeptides having unsubstituted N-termini provided that the penultimate residue is proline. This is Xaa-Pro dipeptidyl-peptidase from Streptococcus pyogenes serotype M28 (strain MGAS6180).